The following is a 128-amino-acid chain: MKRHEAREKAIQTLFQIEVSKLEVDEAIEFALDGEESDPFYEQLVTGTLEHIEDIDALLVENLKNWRLDRLGNVERTILRMATFELLYVETIPENVTINEAVELAKSFGDEEAGKLVNGVLGNIIKED.

It belongs to the NusB family.

In terms of biological role, involved in transcription antitermination. Required for transcription of ribosomal RNA (rRNA) genes. Binds specifically to the boxA antiterminator sequence of the ribosomal RNA (rrn) operons. In Exiguobacterium sp. (strain ATCC BAA-1283 / AT1b), this protein is Transcription antitermination protein NusB.